The sequence spans 191 residues: MGAVALDHLPEPDRLEVAFAGRSNVGKSSLINALTNQKGLARASGEPGRTRELNFFNVEGGDLRIVDLPGYGYAKAPKPVVEKWTRLTKAFLRGRVNLKRVYLLIDSRHGLKDVDLKIMDVFDEAAVSYQVVLTKTDKIKPPAVKRLIGETGEKIARRPAAFPRVIATSSAKQDGVDQLRAEIVALLPDMG.

In terms of domain architecture, EngB-type G spans 13-189 (DRLEVAFAGR…RAEIVALLPD (177 aa)). GTP contacts are provided by residues 21-28 (GRSNVGKS), 48-52 (GRTRE), 67-70 (DLPG), 134-137 (TKTD), and 168-170 (TSS). 2 residues coordinate Mg(2+): Ser-28 and Thr-50.

This sequence belongs to the TRAFAC class TrmE-Era-EngA-EngB-Septin-like GTPase superfamily. EngB GTPase family. Mg(2+) is required as a cofactor.

Necessary for normal cell division and for the maintenance of normal septation. This Maricaulis maris (strain MCS10) (Caulobacter maris) protein is Probable GTP-binding protein EngB.